Reading from the N-terminus, the 353-residue chain is NADH-quinone oxidoreductase subunit H (353 aa).

Transmembrane regions (helical) follow at residues 8–28 (LLVY…LFIW), 75–95 (GVFW…FAAI), 108–128 (IGIL…FMAG), 148–168 (VSYE…TGSL), 178–198 (SVPF…AAMA), 229–249 (LFYL…TTLF), 258–278 (LHPV…IIWV), 297–317 (FLLP…LAAP), and 319–339 (MNTA…ILLF).

This sequence belongs to the complex I subunit 1 family. In terms of assembly, NDH-1 is composed of 14 different subunits. Subunits NuoA, H, J, K, L, M, N constitute the membrane sector of the complex.

The protein resides in the cell membrane. It carries out the reaction a quinone + NADH + 5 H(+)(in) = a quinol + NAD(+) + 4 H(+)(out). Functionally, NDH-1 shuttles electrons from NADH, via FMN and iron-sulfur (Fe-S) centers, to quinones in the respiratory chain. The immediate electron acceptor for the enzyme in this species is believed to be ubiquinone. Couples the redox reaction to proton translocation (for every two electrons transferred, four hydrogen ions are translocated across the cytoplasmic membrane), and thus conserves the redox energy in a proton gradient. This subunit may bind ubiquinone. This chain is NADH-quinone oxidoreductase subunit H, found in Dehalococcoides mccartyi (strain ATCC BAA-2266 / KCTC 15142 / 195) (Dehalococcoides ethenogenes (strain 195)).